A 1733-amino-acid chain; its full sequence is Collagen alpha-1(XXIV) chain (1733 aa).

Residues 1–35 (MHLGAYRTRHGKVSPTTETKLFLRFIVLCVVWISV) form the signal peptide. A Laminin G-like domain is found at 102-229 (ISLRQPLTVL…TVCQLEIMPS (128 aa)). Residue Asn-157 is glycosylated (N-linked (GlcNAc...) asparagine). The interval 257–335 (PHTAGMPTRH…SQEHQTPRAQ (79 aa)) is disordered. Polar residues predominate over residues 312-324 (IPNNRSNGSATVH). N-linked (GlcNAc...) asparagine glycosylation is found at Asn-366, Asn-396, and Asn-448. The tract at residues 505 to 1499 (YLRGPKGDPG…GPPGAPGPRR (995 aa)) is disordered. Collagen-like domains lie at 506–561 (LRGP…PGLS), 577–636 (GLVG…KGVR), 679–738 (GPAG…KGEQ), 742–801 (GEPG…PGQN), 802–861 (GPEG…KGEV), 886–945 (GSIG…KGQR), 946–1005 (GPRG…SGDV), 1006–1065 (GPAG…PGPR), 1072–1131 (GEEG…PGQR), 1135–1189 (GKKG…GIPG), 1191–1215 (RGHQGQPGPSGLPGPKGEKGYPGED), 1220–1279 (GPPG…KGER), 1316–1375 (GVDG…KGEQ), 1376–1435 (GLPG…AGIV), and 1439–1498 (GPKG…PGPR). Pro residues predominate over residues 512-524 (DPGPPGPPGPMGI). 2 stretches are compositionally biased toward low complexity: residues 573–599 (PGLLGLVGPPGLQGAKGLKGHPGLPGL) and 699–708 (PGVTGSVGPA). The segment covering 776-789 (DPGPQGPSGPPGPE) has biased composition (pro residues). Residues 912 to 921 (PGPPGAPGPM) show a composition bias toward pro residues. Positions 923 to 944 (PLGLPGLVGARGAPGSPGPKGQ) are enriched in low complexity. Residues 1045-1054 (GAKGDGGPAG) are compositionally biased toward gly residues. Low complexity predominate over residues 1056 to 1074 (AGATGEPGPRGEPGAPGEE). Positions 1084–1093 (GAPGGSGLPG) are enriched in gly residues. Residues 1175–1205 (PLGLMGPEGEPGIPGYRGHQGQPGPSGLPGP) show a composition bias toward low complexity. Residues 1237-1246 (TGEHGEEGYK) show a composition bias toward basic and acidic residues. The segment covering 1323–1339 (YPGKPGLPGKQGLLGVP) has biased composition (low complexity). Gly residues predominate over residues 1352–1361 (GPQGGKGASG). 2 stretches are compositionally biased toward low complexity: residues 1371–1386 (PKGEQGLPGQPGVPGQ) and 1434–1444 (IVGIVGPKGPI). The span at 1485-1495 (QPGPPGPPGAP) shows a compositional bias: pro residues. The 200-residue stretch at 1534-1733 (SDIFKTLTYL…YIESNSVCFL (200 aa)) folds into the Fibrillar collagen NC1 domain.

This sequence belongs to the fibrillar collagen family. As to expression, expressed in skeleton. Found at ossification centers of the craniofacial, axial and appendicular skeleton. Also expressed in retina and to a lower extent in cornea, skin and tendon.

The protein resides in the secreted. The protein localises to the extracellular space. It is found in the extracellular matrix. In terms of biological role, involved in osteoblast differentiation. The polypeptide is Collagen alpha-1(XXIV) chain (Col24a1) (Mus musculus (Mouse)).